The sequence spans 93 residues: YcgL domain-containing protein swp_2294 (93 aa).

One can recognise a YcgL domain in the interval 1–85 (MICAVYKSLR…PVVNLLEQHK (85 aa)).

The sequence is that of YcgL domain-containing protein swp_2294 from Shewanella piezotolerans (strain WP3 / JCM 13877).